Here is a 155-residue protein sequence, read N- to C-terminus: MAAKLTQEQVDECREIFDLFDSDEDGRIAAGELVTALRSLGQNVDEAEARRFLADATASGGGGGGGGDIDFAAFLSVAARKMRRGATEKELAACLDVFDDARSGVIPAEQLRQAMVSHGDRLTEEEADEMVRKADPAGEGRVEYKEFVKVLMNNK.

3 EF-hand domains span residues 8-43, 86-121, and 122-155; these read EQVD…LGQN, ATEK…HGDR, and LTEE…MNNK. Residues aspartate 21, aspartate 23, aspartate 25, arginine 27, and glutamate 32 each contribute to the Ca(2+) site.

Functionally, potential calcium sensor. This Oryza sativa subsp. japonica (Rice) protein is Probable calcium-binding protein CML9 (CML9).